Consider the following 444-residue polypeptide: N-succinylarginine dihydrolase (444 aa).

Residues 19-28 (AGLSFGNVAS), asparagine 110, and 137-138 (HR) each bind substrate. Glutamate 174 is an active-site residue. Substrate is bound at residue arginine 214. Residue histidine 250 is part of the active site. Positions 252 and 362 each coordinate substrate. Cysteine 368 functions as the Nucleophile in the catalytic mechanism.

Belongs to the succinylarginine dihydrolase family. Homodimer.

It carries out the reaction N(2)-succinyl-L-arginine + 2 H2O + 2 H(+) = N(2)-succinyl-L-ornithine + 2 NH4(+) + CO2. The protein operates within amino-acid degradation; L-arginine degradation via AST pathway; L-glutamate and succinate from L-arginine: step 2/5. Functionally, catalyzes the hydrolysis of N(2)-succinylarginine into N(2)-succinylornithine, ammonia and CO(2). This Shewanella baltica (strain OS185) protein is N-succinylarginine dihydrolase.